The sequence spans 403 residues: NADH-quinone oxidoreductase subunit D (403 aa).

This sequence belongs to the complex I 49 kDa subunit family. In terms of assembly, NDH-1 is composed of 14 different subunits. Subunits NuoB, C, D, E, F, and G constitute the peripheral sector of the complex.

The protein resides in the cell membrane. It carries out the reaction a quinone + NADH + 5 H(+)(in) = a quinol + NAD(+) + 4 H(+)(out). Functionally, NDH-1 shuttles electrons from NADH, via FMN and iron-sulfur (Fe-S) centers, to quinones in the respiratory chain. The immediate electron acceptor for the enzyme in this species is believed to be a menaquinone. Couples the redox reaction to proton translocation (for every two electrons transferred, four hydrogen ions are translocated across the cytoplasmic membrane), and thus conserves the redox energy in a proton gradient. This Amoebophilus asiaticus (strain 5a2) protein is NADH-quinone oxidoreductase subunit D.